The following is a 240-amino-acid chain: CD302 antigen (240 aa).

The C-type lectin domain occupies 40–160 (FQDSCYIFLQ…CEVSSVEGTL (121 aa)). N117 is a glycosylation site (N-linked (GlcNAc...) asparagine). A disulfide bridge connects residues C136 and C151. A helical transmembrane segment spans residues 177–197 (ILISALVIASTVILTVLGAVI). At 198–240 (WFLYKRNLDSGFTTVFSTAPQSPFNDDCVLVVAEENEYAVQFD) the chain is on the cytoplasmic side.

It localises to the membrane. Its subcellular location is the cell projection. It is found in the filopodium. The protein resides in the cytoplasm. The protein localises to the cell cortex. Potential multifunctional C-type lectin receptor that may play roles in endocytosis and phagocytosis as well as in cell adhesion and migration. The sequence is that of CD302 antigen from Sus scrofa (Pig).